We begin with the raw amino-acid sequence, 371 residues long: Glutamate 5-kinase (371 aa).

Lysine 11 lines the ATP pocket. Residues serine 52, aspartate 139, and asparagine 151 each coordinate substrate. ATP-binding positions include 171–172 and 213–219; these read TD and TGGMATK. Residues 278 to 356 enclose the PUA domain; that stretch reads EGSLTLDEGA…AEIPRILGYE (79 aa).

The protein belongs to the glutamate 5-kinase family.

It is found in the cytoplasm. The catalysed reaction is L-glutamate + ATP = L-glutamyl 5-phosphate + ADP. It functions in the pathway amino-acid biosynthesis; L-proline biosynthesis; L-glutamate 5-semialdehyde from L-glutamate: step 1/2. Functionally, catalyzes the transfer of a phosphate group to glutamate to form L-glutamate 5-phosphate. This is Glutamate 5-kinase from Synechococcus sp. (strain JA-2-3B'a(2-13)) (Cyanobacteria bacterium Yellowstone B-Prime).